Here is a 131-residue protein sequence, read N- to C-terminus: Small ribosomal subunit protein uS8 (131 aa).

This sequence belongs to the universal ribosomal protein uS8 family. In terms of assembly, part of the 30S ribosomal subunit. Contacts proteins S5 and S12.

Functionally, one of the primary rRNA binding proteins, it binds directly to 16S rRNA central domain where it helps coordinate assembly of the platform of the 30S subunit. This is Small ribosomal subunit protein uS8 from Wolbachia pipientis subsp. Culex pipiens (strain wPip).